The primary structure comprises 217 residues: Thymidylate kinase (217 aa).

7-14 provides a ligand contact to ATP; the sequence is GIDGAGKS.

It belongs to the thymidylate kinase family.

It carries out the reaction dTMP + ATP = dTDP + ADP. In terms of biological role, phosphorylation of dTMP to form dTDP in both de novo and salvage pathways of dTTP synthesis. The polypeptide is Thymidylate kinase (Pelodictyon phaeoclathratiforme (strain DSM 5477 / BU-1)).